We begin with the raw amino-acid sequence, 714 residues long: Solute carrier family 12 member 8 (714 aa).

6 consecutive transmembrane segments (helical) span residues 37 to 60 (VLFG…VLFL), 72 to 93 (LLGM…LSGI), 99 to 116 (SSIG…VLGG), 123 to 142 (GLLY…TGFA), 154 to 173 (IWAV…GINL), and 185 to 205 (LLLF…FTHL). A glycan (N-linked (GlcNAc...) asparagine) is linked at asparagine 221. Helical transmembrane passes span 233–254 (FFTV…FNMG), 266–289 (LGSL…LGAI), 309–331 (GFLF…LYGA), 360–377 (PVAA…FVFV), and 383–403 (LAPI…YSYF). 2 disordered regions span residues 471 to 503 (KLES…TLQD) and 530 to 550 (GQES…PEGT). Residues 533–548 (SCWNKQTSKSEGTQPE) show a composition bias toward polar residues. Helical transmembrane passes span 593–616 (CNPW…QWVY) and 622–643 (GVAA…LGSA).

It belongs to the SLC12A transporter family. In terms of tissue distribution, ubiquitous with very low level in normal skin.

It localises to the membrane. Its function is as follows. Cation/chloride cotransporter that may play a role in the control of keratinocyte proliferation. This is Solute carrier family 12 member 8 (SLC12A8) from Homo sapiens (Human).